A 413-amino-acid chain; its full sequence is uncharacterized protein (413 aa).

A run of 12 helical transmembrane segments spans residues 42–62, 75–95, 109–129, 133–153, 157–179, 191–211, 238–258, 265–285, 304–324, 326–346, 362–382, and 383–403; these read FLGG…LPVF, LSLS…GPLS, LIAA…VIVF, LTGL…VEEV, SVSF…GRIL, IAFI…LYFL, PTLL…ITIF, LMLS…IIYL, SSIL…TQYN, IFII…SHSI, ATSL…TFGG, and FFWF…ILIF.

This sequence belongs to the major facilitator superfamily.

It is found in the cell membrane. This is an uncharacterized protein from Buchnera aphidicola subsp. Schizaphis graminum (strain Sg).